We begin with the raw amino-acid sequence, 438 residues long: Probable imidazolonepropionase (438 aa).

4-imidazolone-5-propanoate-binding residues include tyrosine 159 and histidine 192. An N-formimidoyl-L-glutamate-binding site is contributed by tyrosine 159. A Fe(3+)-binding site is contributed by histidine 260. Residue histidine 260 coordinates Zn(2+). Residue glutamate 263 participates in 4-imidazolone-5-propanoate binding. Aspartate 334 provides a ligand contact to Fe(3+). Aspartate 334 contributes to the Zn(2+) binding site. Residue asparagine 336 coordinates N-formimidoyl-L-glutamate.

Belongs to the metallo-dependent hydrolases superfamily. HutI family. Requires Zn(2+) as cofactor. It depends on Fe(3+) as a cofactor.

The enzyme catalyses 4-imidazolone-5-propanoate + H2O = N-formimidoyl-L-glutamate. It participates in amino-acid degradation; L-histidine degradation into L-glutamate; N-formimidoyl-L-glutamate from L-histidine: step 3/3. This is Probable imidazolonepropionase (amdhd1) from Xenopus laevis (African clawed frog).